Consider the following 200-residue polypeptide: Dephospho-CoA kinase (200 aa).

The 197-residue stretch at 4–200 folds into the DPCK domain; the sequence is VIGLTGGIAS…AILKKWNIID (197 aa). Residue 12–17 coordinates ATP; that stretch reads ASGKST.

It belongs to the CoaE family.

Its subcellular location is the cytoplasm. It catalyses the reaction 3'-dephospho-CoA + ATP = ADP + CoA + H(+). It functions in the pathway cofactor biosynthesis; coenzyme A biosynthesis; CoA from (R)-pantothenate: step 5/5. In terms of biological role, catalyzes the phosphorylation of the 3'-hydroxyl group of dephosphocoenzyme A to form coenzyme A. The polypeptide is Dephospho-CoA kinase (Bacillus cereus (strain ZK / E33L)).